We begin with the raw amino-acid sequence, 336 residues long: Geranylgeranyl pyrophosphate synthase 6, mitochondrial (336 aa).

The N-terminal 22 residues, 1-22 (MRPRYSLILSAMRLIRPSNRRL), are a transit peptide targeting the mitochondrion. Isopentenyl diphosphate is bound by residues K80, R83, and H112. 2 residues coordinate Mg(2+): D119 and D125. Dimethylallyl diphosphate is bound at residue R130. Residue R131 participates in isopentenyl diphosphate binding. 5 residues coordinate dimethylallyl diphosphate: K221, T222, Q259, K276, and K286.

It belongs to the FPP/GGPP synthase family. In terms of assembly, monomer. Mg(2+) is required as a cofactor.

The protein resides in the mitochondrion. The enzyme catalyses isopentenyl diphosphate + dimethylallyl diphosphate = (2E)-geranyl diphosphate + diphosphate. It catalyses the reaction isopentenyl diphosphate + (2E)-geranyl diphosphate = (2E,6E)-farnesyl diphosphate + diphosphate. The catalysed reaction is isopentenyl diphosphate + (2E,6E)-farnesyl diphosphate = (2E,6E,10E)-geranylgeranyl diphosphate + diphosphate. The protein operates within isoprenoid biosynthesis; farnesyl diphosphate biosynthesis; farnesyl diphosphate from geranyl diphosphate and isopentenyl diphosphate: step 1/1. Its pathway is isoprenoid biosynthesis; geranyl diphosphate biosynthesis; geranyl diphosphate from dimethylallyl diphosphate and isopentenyl diphosphate: step 1/1. It functions in the pathway isoprenoid biosynthesis; geranylgeranyl diphosphate biosynthesis; geranylgeranyl diphosphate from farnesyl diphosphate and isopentenyl diphosphate: step 1/1. Catalyzes the trans-addition of the three molecules of IPP onto DMAPP to form geranylgeranyl pyrophosphate. This chain is Geranylgeranyl pyrophosphate synthase 6, mitochondrial, found in Arabidopsis thaliana (Mouse-ear cress).